Consider the following 758-residue polypeptide: Vitamin K-dependent gamma-carboxylase (758 aa).

A disordered region spans residues 1-31; sequence MAVSARSARSPPDSDKVQKDKAGQTSGRRQG. The residue at position 2 (A2) is an N-acetylalanine. The Cytoplasmic portion of the chain corresponds to 2–60; sequence AVSARSARSPPDSDKVQKDKAGQTSGRRQGSRMGKLLGFEWTDVSSWGKLVTLLNRPTD. The segment covering 12-22 has biased composition (basic and acidic residues); sequence PDSDKVQKDKA. Residues 61-81 form a helical membrane-spanning segment; it reads PASLAVFRFLFGLMMVLDIPQ. The Lumenal portion of the chain corresponds to 82–113; it reads ERGLSSLDRRYLDGLEVCRFPLLDALQPLPLD. An intrachain disulfide couples C99 to C450. The chain crosses the membrane as a helical span at residues 114–134; that stretch reads WMYLVYTIMFLGALGMMLGLR. At 135–136 the chain is on the cytoplasmic side; the sequence is YR. Residues 137-157 form a helical membrane-spanning segment; that stretch reads ISCVLFLLPYWYVFLLDKTSW. The Lumenal portion of the chain corresponds to 158-292; the sequence is NNHSYLYGLL…VSYFHCMNSQ (135 aa). The helical transmembrane segment at 293 to 313 threads the bilayer; the sequence is LFSIGMFPYVMLASSPLFCSP. Over 314–361 the chain is Cytoplasmic; it reads EWPRKLVAHCPKRLQELLPLRTAPQPSASCVYKRSRAKGGQKPGLRHR. The helical transmembrane segment at 362-382 threads the bilayer; that stretch reads LGAAFTLLYLLEQLFLPYSHF. The Lumenal segment spans residues 383 to 758; it reads LTQGYNNWTN…PNADAVHSEF (376 aa). Positions 727-758 are disordered; the sequence is PFEPVGEPSPSNTDSSNPNPSEPNADAVHSEF. Residues 734-750 show a composition bias toward low complexity; sequence PSPSNTDSSNPNPSEPN.

Belongs to the vitamin K-dependent gamma-carboxylase family. In terms of assembly, monomer. May interact with CALU.

Its subcellular location is the endoplasmic reticulum membrane. It carries out the reaction 4-carboxy-L-glutamyl-[protein] + 2,3-epoxyphylloquinone + H2O + H(+) = phylloquinol + L-glutamyl-[protein] + CO2 + O2. Mediates the vitamin K-dependent carboxylation of glutamate residues to calcium-binding gamma-carboxyglutamate (Gla) residues with the concomitant conversion of the reduced hydroquinone form of vitamin K to vitamin K epoxide. Catalyzes gamma-carboxylation of various proteins, such as blood coagulation factors (F2, F7, F9 and F10), osteocalcin (BGLAP) or matrix Gla protein (MGP). This Delphinapterus leucas (Beluga whale) protein is Vitamin K-dependent gamma-carboxylase (GGCX).